The chain runs to 211 residues: MHRRITGKLVIATHNPGKLAEMKELLAPYGIEAVSAGELGLSEPDETGNDFRSNAAIKAIAAAHASKLPSFADDSGIVVDALDGAPGIYSARWAGPTKDFTAAMTRIERLLQERGATAPDKRKAHFVSALCVAWPDDHLEEVEARVDGTLVWPPRGTAGFGYDPMFRPDGHTRTFGEMTSIEKHGLPPLGLALSHRARAFVKLAEICLEPR.

Residue 13–18 (THNPGK) participates in substrate binding. Mg(2+) is bound by residues Asp45 and Asp74. Asp74 functions as the Proton acceptor in the catalytic mechanism. Substrate-binding positions include Ser75, 160–163 (FGYD), Lys183, and 195–196 (HR).

It belongs to the HAM1 NTPase family. In terms of assembly, homodimer. Mg(2+) serves as cofactor.

It carries out the reaction XTP + H2O = XMP + diphosphate + H(+). It catalyses the reaction dITP + H2O = dIMP + diphosphate + H(+). The enzyme catalyses ITP + H2O = IMP + diphosphate + H(+). In terms of biological role, pyrophosphatase that catalyzes the hydrolysis of nucleoside triphosphates to their monophosphate derivatives, with a high preference for the non-canonical purine nucleotides XTP (xanthosine triphosphate), dITP (deoxyinosine triphosphate) and ITP. Seems to function as a house-cleaning enzyme that removes non-canonical purine nucleotides from the nucleotide pool, thus preventing their incorporation into DNA/RNA and avoiding chromosomal lesions. The sequence is that of dITP/XTP pyrophosphatase from Bradyrhizobium diazoefficiens (strain JCM 10833 / BCRC 13528 / IAM 13628 / NBRC 14792 / USDA 110).